The following is a 420-amino-acid chain: uncharacterized protein (420 aa).

This is an uncharacterized protein from Encephalitozoon cuniculi (strain GB-M1) (Microsporidian parasite).